Reading from the N-terminus, the 312-residue chain is Ribosomal RNA small subunit methyltransferase H (312 aa).

S-adenosyl-L-methionine is bound by residues 38-40, D58, F84, D104, and Q111; that span reads GGH.

The protein belongs to the methyltransferase superfamily. RsmH family.

It localises to the cytoplasm. It catalyses the reaction cytidine(1402) in 16S rRNA + S-adenosyl-L-methionine = N(4)-methylcytidine(1402) in 16S rRNA + S-adenosyl-L-homocysteine + H(+). Functionally, specifically methylates the N4 position of cytidine in position 1402 (C1402) of 16S rRNA. This chain is Ribosomal RNA small subunit methyltransferase H, found in Alcanivorax borkumensis (strain ATCC 700651 / DSM 11573 / NCIMB 13689 / SK2).